Consider the following 179-residue polypeptide: Translation initiation factor IF-3 (179 aa).

The protein belongs to the IF-3 family. In terms of assembly, monomer.

The protein resides in the cytoplasm. IF-3 binds to the 30S ribosomal subunit and shifts the equilibrium between 70S ribosomes and their 50S and 30S subunits in favor of the free subunits, thus enhancing the availability of 30S subunits on which protein synthesis initiation begins. This Buchnera aphidicola subsp. Acyrthosiphon pisum (strain APS) (Acyrthosiphon pisum symbiotic bacterium) protein is Translation initiation factor IF-3.